Consider the following 1073-residue polypeptide: Semaphorin-6D (1073 aa).

Residues 1 to 20 (MRVFLLCAYILLLMVSQLRA) form the signal peptide. At 21-662 (VSFPEDDEPL…GESNQMVHMN (642 aa)) the chain is on the extracellular side. The 486-residue stretch at 27–512 (DEPLNTVDYH…FSSCIIRIPL (486 aa)) folds into the Sema domain. The N-linked (GlcNAc...) asparagine glycan is linked to asparagine 51. 4 disulfide bridges follow: cysteine 108–cysteine 118, cysteine 136–cysteine 145, cysteine 259–cysteine 370, and cysteine 284–cysteine 329. Asparagine 283 carries N-linked (GlcNAc...) asparagine glycosylation. Asparagine 435 and asparagine 461 each carry an N-linked (GlcNAc...) asparagine glycan. Cystine bridges form between cysteine 477-cysteine 506, cysteine 515-cysteine 533, cysteine 521-cysteine 568, and cysteine 525-cysteine 541. Positions 514-569 (RCERYGSCKKSCIASRDPYCGWLSQGSCGRVTPGMLAEGYEQDTEFGNTAHLGDCH) constitute a PSI domain. The N-linked (GlcNAc...) asparagine glycan is linked to asparagine 631. A helical transmembrane segment spans residues 663–683 (VLITCVFAAFVLGAFIAGVAV). Residues 684–1073 (YCYRDMFVRK…SVRPLNKYTY (390 aa)) are Cytoplasmic-facing. Phosphoserine is present on residues serine 723, serine 734, and serine 744. Disordered stretches follow at residues 744–775 (SRKE…PTPE), 787–825 (AMKS…GHIP), 839–874 (TSFS…RSVD), 914–1005 (SMSE…PTPT), and 1021–1073 (LQPS…KYTY). Phosphothreonine is present on threonine 773. Over residues 790 to 805 (SHSEKAHGHGASRKET) the composition is skewed to basic and acidic residues. A phosphoserine mark is found at serine 931, serine 957, and serine 983. Positions 931-942 (SPPSTLPRNSPT) are enriched in polar residues. Polar residues-rich tracts occupy residues 980-995 (NLNS…QPSM) and 1021-1037 (LQPS…NGTL).

Belongs to the semaphorin family.

Its subcellular location is the cell membrane. The protein resides in the cytoplasm. Shows growth cone collapsing activity on dorsal root ganglion (DRG) neurons in vitro. May be a stop signal for the DRG neurons in their target areas, and possibly also for other neurons. May also be involved in the maintenance and remodeling of neuronal connections. Ligand of TREM2 with PLXNA1 as coreceptor in dendritic cells, plays a role in the generation of immune responses and skeletal homeostasis. The polypeptide is Semaphorin-6D (Homo sapiens (Human)).